The chain runs to 125 residues: Holo-[acyl-carrier-protein] synthase (125 aa).

Residues D8 and E57 each contribute to the Mg(2+) site.

The protein belongs to the P-Pant transferase superfamily. AcpS family. Mg(2+) serves as cofactor.

It localises to the cytoplasm. The catalysed reaction is apo-[ACP] + CoA = holo-[ACP] + adenosine 3',5'-bisphosphate + H(+). Its function is as follows. Transfers the 4'-phosphopantetheine moiety from coenzyme A to a Ser of acyl-carrier-protein. This is Holo-[acyl-carrier-protein] synthase from Geobacter sp. (strain M21).